Here is a 726-residue protein sequence, read N- to C-terminus: Catalase-peroxidase (726 aa).

Polar residues predominate over residues 1–12 (MSTPSDQHNTLS). Positions 1–34 (MSTPSDQHNTLSAGKCPFHQGNSNQTAGGGTSSR) are disordered. The tryptophyl-tyrosyl-methioninium (Trp-Tyr) (with M-252) cross-link spans 105–226 (WHSAGTYRSA…LGATEMGLIY (122 aa)). Residue His-106 is the Proton acceptor of the active site. A cross-link (tryptophyl-tyrosyl-methioninium (Tyr-Met) (with W-105)) is located at residues 226–252 (YVNPEGPNHSGDPASAAPAIRATFGNM). Residue His-267 participates in heme b binding.

The protein belongs to the peroxidase family. Peroxidase/catalase subfamily. As to quaternary structure, homodimer or homotetramer. It depends on heme b as a cofactor. Post-translationally, formation of the three residue Trp-Tyr-Met cross-link is important for the catalase, but not the peroxidase activity of the enzyme.

The catalysed reaction is H2O2 + AH2 = A + 2 H2O. It catalyses the reaction 2 H2O2 = O2 + 2 H2O. In terms of biological role, bifunctional enzyme with both catalase and broad-spectrum peroxidase activity. The protein is Catalase-peroxidase of Cronobacter sakazakii (strain ATCC BAA-894) (Enterobacter sakazakii).